We begin with the raw amino-acid sequence, 333 residues long: Fructose-1,6-bisphosphatase class 1 1 (333 aa).

4 residues coordinate Mg(2+): Glu-81, Asp-100, Leu-102, and Asp-103. Substrate contacts are provided by residues 103–106 (DGSS) and Asn-191. Residue Glu-263 coordinates Mg(2+).

The protein belongs to the FBPase class 1 family. As to quaternary structure, homotetramer. Requires Mg(2+) as cofactor.

The protein resides in the cytoplasm. It catalyses the reaction beta-D-fructose 1,6-bisphosphate + H2O = beta-D-fructose 6-phosphate + phosphate. Its pathway is carbohydrate biosynthesis; Calvin cycle. This chain is Fructose-1,6-bisphosphatase class 1 1, found in Cereibacter sphaeroides (strain ATCC 17029 / ATH 2.4.9) (Rhodobacter sphaeroides).